The chain runs to 59 residues: Large ribosomal subunit protein uL30 (59 aa).

It belongs to the universal ribosomal protein uL30 family. Part of the 50S ribosomal subunit.

The chain is Large ribosomal subunit protein uL30 from Staphylococcus haemolyticus (strain JCSC1435).